Here is a 353-residue protein sequence, read N- to C-terminus: Thiamine-phosphate synthase (353 aa).

A unknown region spans residues 1-128 (MESMPVAPST…ARTAAAVRYA (128 aa)). The thiamine-phosphate synthase stretch occupies residues 129-353 (LYDHEVRILE…ASRQLLDLLT (225 aa)). 4-amino-2-methyl-5-(diphosphooxymethyl)pyrimidine-binding positions include 185-189 (QYRRK) and N217. D218 and D237 together coordinate Mg(2+). S256 contributes to the 4-amino-2-methyl-5-(diphosphooxymethyl)pyrimidine binding site. 282–284 (TAT) provides a ligand contact to 2-[(2R,5Z)-2-carboxy-4-methylthiazol-5(2H)-ylidene]ethyl phosphate. K285 contacts 4-amino-2-methyl-5-(diphosphooxymethyl)pyrimidine. 2-[(2R,5Z)-2-carboxy-4-methylthiazol-5(2H)-ylidene]ethyl phosphate is bound by residues G312 and 332–333 (VS).

It belongs to the thiamine-phosphate synthase family. The cofactor is Mg(2+).

The catalysed reaction is 2-[(2R,5Z)-2-carboxy-4-methylthiazol-5(2H)-ylidene]ethyl phosphate + 4-amino-2-methyl-5-(diphosphooxymethyl)pyrimidine + 2 H(+) = thiamine phosphate + CO2 + diphosphate. It catalyses the reaction 2-(2-carboxy-4-methylthiazol-5-yl)ethyl phosphate + 4-amino-2-methyl-5-(diphosphooxymethyl)pyrimidine + 2 H(+) = thiamine phosphate + CO2 + diphosphate. It carries out the reaction 4-methyl-5-(2-phosphooxyethyl)-thiazole + 4-amino-2-methyl-5-(diphosphooxymethyl)pyrimidine + H(+) = thiamine phosphate + diphosphate. It participates in cofactor biosynthesis; thiamine diphosphate biosynthesis; thiamine phosphate from 4-amino-2-methyl-5-diphosphomethylpyrimidine and 4-methyl-5-(2-phosphoethyl)-thiazole: step 1/1. In terms of biological role, condenses 4-methyl-5-(beta-hydroxyethyl)thiazole monophosphate (THZ-P) and 2-methyl-4-amino-5-hydroxymethyl pyrimidine pyrophosphate (HMP-PP) to form thiamine monophosphate (TMP). The polypeptide is Thiamine-phosphate synthase (Synechococcus sp. (strain WH7803)).